The chain runs to 291 residues: GCN5-related N-acetyltransferase 4, chloroplastic (291 aa).

Residues 1-61 constitute a chloroplast transit peptide; it reads MRSTPLGTTA…PSQINSGACN (61 aa). The N-acetyltransferase domain maps to 76-280; it reads IVVREARLED…RFTFMMKLVN (205 aa). Residues 199-201 and 207-212 each bind acetyl-CoA; these read VAV and RKGIAK. Lys217 bears the N6-acetyllysine mark. Acetyl-CoA is bound by residues 238 to 240 and Tyr245; that span reads NLG. Residue Tyr245 is the Proton donor of the active site. N6-acetyllysine is present on residues Lys254 and Lys265.

It belongs to the acetyltransferase family. GNAT subfamily. In terms of assembly, oligomer. In terms of processing, autoacetylated at K-217, K-254 and K-265. In terms of tissue distribution, expressed in green tissues.

Its subcellular location is the plastid. The protein localises to the chloroplast. The enzyme catalyses an N-terminal L-alpha-aminoacyl-[protein] + acetyl-CoA = N-terminal N(alpha)-acetyl-L-alpha-aminoacyl-[protein] + CoA + H(+). It catalyses the reaction L-lysyl-[protein] + acetyl-CoA = N(6)-acetyl-L-lysyl-[protein] + CoA + H(+). It carries out the reaction N-terminal L-alanyl-[protein] + acetyl-CoA = N-terminal N(alpha)-acetyl-L-alanyl-[protein] + CoA + H(+). The catalysed reaction is N-terminal L-seryl-[protein] + acetyl-CoA = N-terminal N(alpha)-acetyl-L-seryl-[protein] + CoA + H(+). The enzyme catalyses N-terminal L-threonyl-[protein] + acetyl-CoA = N-terminal N(alpha)-acetyl-L-threonyl-[protein] + CoA + H(+). It catalyses the reaction N-terminal L-methionyl-[protein] + acetyl-CoA = N-terminal N(alpha)-acetyl-L-methionyl-[protein] + CoA + H(+). It carries out the reaction N-terminal L-valyl-[protein] + acetyl-CoA = N-terminal N(alpha)-acetyl-L-valyl-[protein] + CoA + H(+). The catalysed reaction is N-terminal glycyl-[protein] + acetyl-CoA = N-terminal N(alpha)-acetylglycyl-[protein] + CoA + H(+). Functionally, protein acetyltransferase with dual specificity triggering both N-alpha-acetylation (NTA), with a large spectrum of modified N-termini, including methionine, alanine, serine, threonine and to a lower extent glycine and valine as substrates, and epsilon-lysine acetylation (KA) of several plastid proteins. The chain is GCN5-related N-acetyltransferase 4, chloroplastic from Arabidopsis thaliana (Mouse-ear cress).